The chain runs to 494 residues: Smoothelin-like protein 1 (494 aa).

Basic and acidic residues-rich tracts occupy residues 1–10 (MEQKEGKLSE), 74–104 (DEVK…KEET), 112–166 (TGRK…KATV), and 179–232 (TGQR…KEEA). The tract at residues 1-348 (MEQKEGKLSE…ARPRGPRAQN (348 aa)) is disordered. Residues 123-145 (KEAEEKESTLASEKQKAEEKEAK) adopt a coiled-coil conformation. A compositionally biased stretch (acidic residues) spans 233-255 (DAKEEAEDAEEAEPGSPSEEQEQ). Low complexity-rich tracts occupy residues 269–279 (PSSPEEWPESP) and 302–314 (SPSA…SDVP). The segment covering 324 to 335 (GEKKEKAPERRV) has biased composition (basic and acidic residues). Position 336 is a phosphoserine (Ser336). A Calponin-homology (CH) domain is found at 378-484 (GGVKNMLLEW…YIQELYRSLV (107 aa)). Residues 476 to 494 (IQELYRSLVQKGLVKTKKK) are calmodulin-binding.

It belongs to the smoothelin family. Interacts with PPP1R12A. Maximal phosphorylation of Ser-336 correlates with maximal relaxation of aorta in response to acetylcholine. As to expression, expressed in striated muscles, specifically in type 2a fibers (at protein level).

The protein localises to the cytoplasm. The protein resides in the myofibril. Its subcellular location is the sarcomere. It localises to the i band. It is found in the m line. The protein localises to the nucleus. Its function is as follows. Plays a role in the regulation of contractile properties of both striated and smooth muscles. When unphosphorylated, may inhibit myosin dephosphorylation. Phosphorylation at Ser-299 reduces this inhibitory activity. This chain is Smoothelin-like protein 1 (SMTNL1), found in Homo sapiens (Human).